The following is a 134-amino-acid chain: Large ribosomal subunit protein uL16c (134 aa).

This sequence belongs to the universal ribosomal protein uL16 family. In terms of assembly, part of the 50S ribosomal subunit.

Its subcellular location is the plastid. The protein resides in the chloroplast. This Solanum lycopersicum (Tomato) protein is Large ribosomal subunit protein uL16c.